The sequence spans 121 residues: Small ribosomal subunit protein uS13 (121 aa).

The segment at 94–121 is disordered; sequence GLPVRGQRTRTNSRTRKGPKKGAAALKK.

It belongs to the universal ribosomal protein uS13 family. As to quaternary structure, part of the 30S ribosomal subunit. Forms a loose heterodimer with protein S19. Forms two bridges to the 50S subunit in the 70S ribosome.

In terms of biological role, located at the top of the head of the 30S subunit, it contacts several helices of the 16S rRNA. In the 70S ribosome it contacts the 23S rRNA (bridge B1a) and protein L5 of the 50S subunit (bridge B1b), connecting the 2 subunits; these bridges are implicated in subunit movement. Contacts the tRNAs in the A and P-sites. In Leptothrix cholodnii (strain ATCC 51168 / LMG 8142 / SP-6) (Leptothrix discophora (strain SP-6)), this protein is Small ribosomal subunit protein uS13.